We begin with the raw amino-acid sequence, 293 residues long: Probable chromosome 2-partitioning protein ParB (293 aa).

It belongs to the ParB family.

Its function is as follows. Involved in chromosome partition. Localize to both poles of the predivisional cell following completion of DNA replication. Binds to the DNA origin of replication. This chain is Probable chromosome 2-partitioning protein ParB (parB2), found in Deinococcus radiodurans (strain ATCC 13939 / DSM 20539 / JCM 16871 / CCUG 27074 / LMG 4051 / NBRC 15346 / NCIMB 9279 / VKM B-1422 / R1).